We begin with the raw amino-acid sequence, 207 residues long: Ribosomal RNA large subunit methyltransferase E (207 aa).

S-adenosyl-L-methionine is bound by residues Gly-51, Trp-53, Asp-69, Asp-85, and Asp-108. Residue Lys-148 is the Proton acceptor of the active site.

Belongs to the class I-like SAM-binding methyltransferase superfamily. RNA methyltransferase RlmE family.

Its subcellular location is the cytoplasm. It carries out the reaction uridine(2552) in 23S rRNA + S-adenosyl-L-methionine = 2'-O-methyluridine(2552) in 23S rRNA + S-adenosyl-L-homocysteine + H(+). Its function is as follows. Specifically methylates the uridine in position 2552 of 23S rRNA at the 2'-O position of the ribose in the fully assembled 50S ribosomal subunit. The protein is Ribosomal RNA large subunit methyltransferase E of Methanospirillum hungatei JF-1 (strain ATCC 27890 / DSM 864 / NBRC 100397 / JF-1).